Here is a 786-residue protein sequence, read N- to C-terminus: Endonuclease MutS2 (786 aa).

Position 335–342 (335–342 (GPNTGGKT)) interacts with ATP. In terms of domain architecture, Smr spans 711–786 (LDLRGERFEN…GLGVTVVELK (76 aa)).

This sequence belongs to the DNA mismatch repair MutS family. MutS2 subfamily. As to quaternary structure, homodimer. Binds to stalled ribosomes, contacting rRNA.

In terms of biological role, endonuclease that is involved in the suppression of homologous recombination and thus may have a key role in the control of bacterial genetic diversity. Its function is as follows. Acts as a ribosome collision sensor, splitting the ribosome into its 2 subunits. Detects stalled/collided 70S ribosomes which it binds and splits by an ATP-hydrolysis driven conformational change. Acts upstream of the ribosome quality control system (RQC), a ribosome-associated complex that mediates the extraction of incompletely synthesized nascent chains from stalled ribosomes and their subsequent degradation. Probably generates substrates for RQC. The polypeptide is Endonuclease MutS2 (Bacillus cereus (strain Q1)).